A 607-amino-acid chain; its full sequence is DNA mismatch repair protein MutL (607 aa).

The disordered stretch occupies residues 374 to 411; the sequence is RTEAGNEHVPSANRIQPPDPSIDMPDEPVPEQTDEPVA. A compositionally biased stretch (acidic residues) spans 397-407; the sequence is MPDEPVPEQTD.

The protein belongs to the DNA mismatch repair MutL/HexB family.

This protein is involved in the repair of mismatches in DNA. It is required for dam-dependent methyl-directed DNA mismatch repair. May act as a 'molecular matchmaker', a protein that promotes the formation of a stable complex between two or more DNA-binding proteins in an ATP-dependent manner without itself being part of a final effector complex. The protein is DNA mismatch repair protein MutL of Exiguobacterium sibiricum (strain DSM 17290 / CCUG 55495 / CIP 109462 / JCM 13490 / 255-15).